Consider the following 228-residue polypeptide: MEQEICVVSFSGGQDSTTLAVWAKKRFKKVYLVGFDYAQKHSVELECAQKIASLLQLPYEIISLDFLENITRSALFKNSNDLMGHSHVQNKDLPNSFVPNRNAIFITLLHSYAQKIGASNIALGVSQADFSGYPDCKEDFIKSIEHALNLGSNTAIKILTPLMFLNKAQEFQMAKDLGVLDLVIKETHTCYQGERKILHAYGYGCNECPACQLRKKGYEEFQTKVLFQ.

10-20 (FSGGQDSTTLA) lines the ATP pocket. The Zn(2+) site is built by C190, C205, C208, and C211.

This sequence belongs to the QueC family. It depends on Zn(2+) as a cofactor.

The catalysed reaction is 7-carboxy-7-deazaguanine + NH4(+) + ATP = 7-cyano-7-deazaguanine + ADP + phosphate + H2O + H(+). The protein operates within purine metabolism; 7-cyano-7-deazaguanine biosynthesis. Catalyzes the ATP-dependent conversion of 7-carboxy-7-deazaguanine (CDG) to 7-cyano-7-deazaguanine (preQ(0)). This is 7-cyano-7-deazaguanine synthase from Helicobacter pylori (strain HPAG1).